We begin with the raw amino-acid sequence, 824 residues long: MCEVILWSSAQMASFPDSDLQTCPLCKELCGCSAPISSNSSTSSSSSQTSNSSSTSSTRRLHVLPCLHAFCRQCLEGQRSPGDPLKLRCPTCDQKVSLSESGVDALPSSNFLFSNLLDVVVSAEEQGKNGRSSAVVHHGGLLRPQHLSDPQCSSCDEGNPATSHCLDCQEYLCDNCVRAHQRVRLTKDHFIEGLLESLHLANRTNNSNTPVSISQSFHNSFSMLNVFQERMDFCQHHDDAVLRFFCDSCTVPICRECSLGRHAGHSFTYLQDALQDSRALTIQLLADAQQGRQAIQLSIEKAQAIAEQVELKAKVVQSEVKTITLRHKKALEERECELLWKVEKIRQVKAKSLYLQVEKLHQNLTKLDSTIATVTQVLEEGRSIDVLLAREHMLNQLQELKSLRCILQPQEDDRIMFTPPDQALLIAIKSLGLISSGAFATASKAHGEGIKRALQGKPASFTVVGYDHDGEPRLSGGDSVSVVLMSPDGNLSSAEVSDHQDGTYTVSYLPKGEGEHLLSVLICNQHIEGSPFKVMVKSGRSYGGVGLPMASFGGEGDGDGQLCRPWGICVDKEGYVVVADRSNNRVQIFKPCGTFHHKFGTLGSRPGQFDRPAGVACDSQRRIIVADKDNHRIQIFTFDGQFLLKFGEKGTKNGQFNYPWDVAVNFEGKILVSDTRNHRVQLFGPDGTFLNKYGFEGALWKHFDSPRGVAFNQEGHLVVTDFNNHRLLVIRPDCQSARFLGSEGTGNGQFLRPQGVAVDQEDRIIVADSRNHRIQVFEPNGNFLCKFGTHGNGFGQMDRPSGIAVTPDGVIVAVDFGNNRILMF.

The segment at 23–93 adopts an RING-type zinc-finger fold; that stretch reads CPLCKELCGC…PLKLRCPTCD (71 aa). The disordered stretch occupies residues 37–56; the sequence is SSNSSTSSSSSQTSNSSSTS. The segment at 147–194 adopts a B box-type 1; atypical zinc-finger fold; that stretch reads LSDPQCSSCDEGNPATSHCLDCQEYLCDNCVRAHQRVRLTKDHFIEGL. Residues Cys152, Cys155, Cys176, His180, Cys234, His237, Cys257, and His262 each contribute to the Zn(2+) site. The B box-type 2 zinc finger occupies 229–270; the sequence is ERMDFCQHHDDAVLRFFCDSCTVPICRECSLGRHAGHSFTYL. Residues 293-321 are a coiled coil; the sequence is QAIQLSIEKAQAIAEQVELKAKVVQSEVK. The stretch at 435-536 is one Filamin repeat; the sequence is SSGAFATASK…IEGSPFKVMV (102 aa). NHL repeat units follow at residues 549–592, 596–639, 643–686, 690–733, 737–780, and 784–824; these read MASF…FKPC, HHKF…FTFD, LLKF…FGPD, LNKY…IRPD, ARFL…FEPN, and LCKF…ILMF.

The protein belongs to the TRIM/RBCC family.

It localises to the cytoplasm. It is found in the P-body. It carries out the reaction S-ubiquitinyl-[E2 ubiquitin-conjugating enzyme]-L-cysteine + [acceptor protein]-L-lysine = [E2 ubiquitin-conjugating enzyme]-L-cysteine + N(6)-ubiquitinyl-[acceptor protein]-L-lysine.. It functions in the pathway protein modification; protein ubiquitination. Functionally, E3 ubiquitin-protein ligase that cooperates with the microRNAs (miRNAs) machinery and promotes embryonic stem cells proliferation and maintenance. Binds to miRNAs and participates in post-transcriptional repression of transcripts. Required to maintain proliferation and prevent premature differentiation of neural progenitor cells during early neural development. The chain is E3 ubiquitin-protein ligase TRIM71 (trim71) from Danio rerio (Zebrafish).